Reading from the N-terminus, the 1644-residue chain is Terminal uridylyltransferase 4 (1644 aa).

Disordered stretches follow at residues 31-63 (NQTL…QNDI), 96-168 (CKAK…SLLL), and 205-257 (ALQN…EMDY). The span at 36-46 (ARNDKSVKEIE) shows a compositional bias: basic and acidic residues. Ser-104 is modified (phosphoserine). Over residues 112–125 (TISQAKSEKATSLQ) the composition is skewed to polar residues. Phosphoserine is present on residues Ser-134 and Ser-156. Residues 206–222 (LQNSPRSQKQQTCTDNT) show a composition bias toward polar residues. The segment covering 238–252 (DLSKMKNDESNKENS) has biased composition (basic and acidic residues). The required for interaction with LIN28A and pre-let-7 RNA stretch occupies residues 253–333 (SEMDYLENAT…KEKRHKKNIL (81 aa)). Positions 306, 309, 322, and 328 each coordinate Zn(2+). The disordered stretch occupies residues 579-617 (EKNSIAEENKAKADQPKDDTKKTETDNQSNAMKEKHGKS). A compositionally biased stretch (basic and acidic residues) spans 582–603 (SIAEENKAKADQPKDDTKKTET). Positions 628-678 (SLGQLWLELLKFYTLDFALEEYVICVRIQDILTRENKNWPKRRIAIEDPFS) constitute a PAP-associated 1 domain. Residues 794-816 (GQDSSSLSTSKSSEIEPKLDKKQ) form a disordered region. Positions 806–816 (SEIEPKLDKKQ) are enriched in basic and acidic residues. The interval 901-1634 (DKFILTSGKP…CATRRCRERC (734 aa)) is sufficient for monouridylation activity. Residues 913-930 (IVCSICKKDGHSKNDCPE) form a CCHC-type 1 zinc finger. UTP-binding positions include 998–1001 (SSKN), 1008–1011 (SDLD), Asn-1081, Lys-1103, 1121–1125 (SYAYI), and His-1237. The Mg(2+) site is built by Asp-1009 and Asp-1011. The PAP-associated 2 domain occupies 1184–1237 (SLGELWLGLLRFYTEEFDFKEYVISIRQKKLLTTFEKQWTSKCIAIEDPFDLNH). The segment at 1293 to 1310 (RCCRVCGKIGHYMKDCPK) adopts a CCHC-type 2 zinc-finger fold. Residues 1321–1348 (KDSEEEKEGNEEEKDSRDVLDPRDLHDT) are disordered. Positions 1334–1348 (KDSRDVLDPRDLHDT) are enriched in basic and acidic residues. The CCHC-type 3 zinc finger occupies 1357–1374 (LRCFICGDAGHVRRECPE). Residues 1401–1426 (AGSAQQQGDQSIRTRQSSECSESPSY) are compositionally biased toward low complexity. The tract at residues 1401-1482 (AGSAQQQGDQ…LYNFPQSPPA (82 aa)) is disordered. Polar residues predominate over residues 1441 to 1452 (AAITQPSSQPGS). Residues 1453–1470 (QPKLGPPQQGAQPPHQVQ) are compositionally biased toward low complexity. Omega-N-methylarginine is present on Arg-1624.

It belongs to the DNA polymerase type-B-like family. As to quaternary structure, interacts with LIN28A in the presence of pre-let-7 RNA. Interacts with T2BP. Interacts with MOV10; the interaction is RNA-dependent. Requires Mg(2+) as cofactor. The cofactor is Mn(2+).

Its subcellular location is the nucleus. It is found in the cytoplasm. The protein resides in the cytoplasmic ribonucleoprotein granule. It carries out the reaction RNA(n) + UTP = RNA(n)-3'-uridine ribonucleotide + diphosphate. Functionally, uridylyltransferase that mediates the terminal uridylation of mRNAs with short (less than 25 nucleotides) poly(A) tails, hence facilitating global mRNA decay. Essential for both oocyte maturation and fertility. Through 3' terminal uridylation of mRNA, sculpts, with TUT7, the maternal transcriptome by eliminating transcripts during oocyte growth. Involved in microRNA (miRNA)-induced gene silencing through uridylation of deadenylated miRNA targets. Also functions as an integral regulator of microRNA biogenesis using 3 different uridylation mechanisms. Acts as a suppressor of miRNA biogenesis by mediating the terminal uridylation of some miRNA precursors, including that of let-7 (pre-let-7), miR107, miR-143 and miR-200c. Uridylated miRNAs are not processed by Dicer and undergo degradation. Degradation of pre-let-7 contributes to the maintenance of embryonic stem (ES) cell pluripotency. Also catalyzes the 3' uridylation of miR-26A, a miRNA that targets IL6 transcript. This abrogates the silencing of IL6 transcript, hence promoting cytokine expression. In the absence of LIN28A, TUT7 and TUT4 monouridylate group II pre-miRNAs, which includes most of pre-let7 members, that shapes an optimal 3' end overhang for efficient processing. Adds oligo-U tails to truncated pre-miRNAS with a 5' overhang which may promote rapid degradation of non-functional pre-miRNA species. May also suppress Toll-like receptor-induced NF-kappa-B activation via binding to T2BP. Does not play a role in replication-dependent histone mRNA degradation. Due to functional redundancy between TUT4 and TUT7, the identification of the specific role of each of these proteins is difficult. TUT4 and TUT7 restrict retrotransposition of long interspersed element-1 (LINE-1) in cooperation with MOV10 counteracting the RNA chaperonne activity of L1RE1. TUT7 uridylates LINE-1 mRNAs in the cytoplasm which inhibits initiation of reverse transcription once in the nucleus, whereas uridylation by TUT4 destabilizes mRNAs in cytoplasmic ribonucleoprotein granules. The chain is Terminal uridylyltransferase 4 from Homo sapiens (Human).